Here is a 518-residue protein sequence, read N- to C-terminus: Dihydropyrimidinase 2 (518 aa).

The Zn(2+) site is built by H59, H61, and K152. K152 is subject to N6-carboxylysine. Y157 contributes to the substrate binding site. Residues H185 and H241 each contribute to the Zn(2+) site. S291 is a substrate binding site. A Zn(2+)-binding site is contributed by D319. N340 contributes to the substrate binding site.

Belongs to the metallo-dependent hydrolases superfamily. Hydantoinase/dihydropyrimidinase family. As to quaternary structure, homotetramer. Zn(2+) is required as a cofactor. In terms of processing, carboxylation allows a single lysine to coordinate two zinc ions.

It catalyses the reaction 5,6-dihydrouracil + H2O = 3-(carbamoylamino)propanoate + H(+). The chain is Dihydropyrimidinase 2 (dhp-2) from Caenorhabditis briggsae.